The following is a 245-amino-acid chain: tRNA1(Val) (adenine(37)-N6)-methyltransferase (245 aa).

It belongs to the methyltransferase superfamily. tRNA (adenine-N(6)-)-methyltransferase family.

It is found in the cytoplasm. The catalysed reaction is adenosine(37) in tRNA1(Val) + S-adenosyl-L-methionine = N(6)-methyladenosine(37) in tRNA1(Val) + S-adenosyl-L-homocysteine + H(+). In terms of biological role, specifically methylates the adenine in position 37 of tRNA(1)(Val) (anticodon cmo5UAC). This chain is tRNA1(Val) (adenine(37)-N6)-methyltransferase, found in Enterobacter sp. (strain 638).